Here is a 239-residue protein sequence, read N- to C-terminus: tRNA (guanine-N(1)-)-methyltransferase (239 aa).

Residues Gly-108 and 127–132 (LGDYVL) contribute to the S-adenosyl-L-methionine site.

It belongs to the RNA methyltransferase TrmD family. Homodimer.

The protein resides in the cytoplasm. It carries out the reaction guanosine(37) in tRNA + S-adenosyl-L-methionine = N(1)-methylguanosine(37) in tRNA + S-adenosyl-L-homocysteine + H(+). In terms of biological role, specifically methylates guanosine-37 in various tRNAs. In Streptococcus pneumoniae (strain JJA), this protein is tRNA (guanine-N(1)-)-methyltransferase.